Consider the following 693-residue polypeptide: Translation initiation factor IF-2 (693 aa).

One can recognise a tr-type G domain in the interval 181-349 (PRPPVVTVMG…MILLVAEMNE (169 aa)). The tract at residues 190-197 (GHVDHGKT) is G1. 190 to 197 (GHVDHGKT) contributes to the GTP binding site. Residues 215–219 (GITQS) form a G2 region. The tract at residues 236 to 239 (DTPG) is G3. GTP contacts are provided by residues 236 to 240 (DTPGH) and 290 to 293 (NKID). Positions 290-293 (NKID) are G4. Positions 327–329 (SAR) are G5.

Belongs to the TRAFAC class translation factor GTPase superfamily. Classic translation factor GTPase family. IF-2 subfamily.

The protein localises to the cytoplasm. In terms of biological role, one of the essential components for the initiation of protein synthesis. Protects formylmethionyl-tRNA from spontaneous hydrolysis and promotes its binding to the 30S ribosomal subunits. Also involved in the hydrolysis of GTP during the formation of the 70S ribosomal complex. The sequence is that of Translation initiation factor IF-2 from Thermotoga petrophila (strain ATCC BAA-488 / DSM 13995 / JCM 10881 / RKU-1).